The chain runs to 404 residues: Dihydroorotase (404 aa).

Positions 57 and 59 each coordinate Zn(2+). Residues 59–61 (HLR) and N91 each bind substrate. The Zn(2+) site is built by K135, H164, H204, and D272. K135 bears the N6-carboxylysine mark. D272 is a catalytic residue. Substrate-binding positions include H276 and 286–287 (AG).

Belongs to the metallo-dependent hydrolases superfamily. DHOase family. Class I DHOase subfamily. Zn(2+) serves as cofactor.

The catalysed reaction is (S)-dihydroorotate + H2O = N-carbamoyl-L-aspartate + H(+). It functions in the pathway pyrimidine metabolism; UMP biosynthesis via de novo pathway; (S)-dihydroorotate from bicarbonate: step 3/3. In terms of biological role, catalyzes the reversible cyclization of carbamoyl aspartate to dihydroorotate. The protein is Dihydroorotase of Pyrococcus abyssi (strain GE5 / Orsay).